A 126-amino-acid polypeptide reads, in one-letter code: Large ribosomal subunit protein bL17 (126 aa).

This sequence belongs to the bacterial ribosomal protein bL17 family. Part of the 50S ribosomal subunit. Contacts protein L32.

The chain is Large ribosomal subunit protein bL17 from Rickettsia felis (strain ATCC VR-1525 / URRWXCal2) (Rickettsia azadi).